The following is a 215-amino-acid chain: NAD(P)H-hydrate epimerase (215 aa).

In terms of domain architecture, YjeF N-terminal spans 10 to 211; that stretch reads AQRYDAHATN…DIGIYAQDRV (202 aa). (6S)-NADPHX is bound at residue 58–62; that stretch reads NNGGD. The K(+) site is built by N59 and D121. (6S)-NADPHX contacts are provided by residues 125–131 and D154; that span reads GVGLTRD. S157 contacts K(+).

This sequence belongs to the NnrE/AIBP family. Requires K(+) as cofactor.

It catalyses the reaction (6R)-NADHX = (6S)-NADHX. It carries out the reaction (6R)-NADPHX = (6S)-NADPHX. Catalyzes the epimerization of the S- and R-forms of NAD(P)HX, a damaged form of NAD(P)H that is a result of enzymatic or heat-dependent hydration. This is a prerequisite for the S-specific NAD(P)H-hydrate dehydratase to allow the repair of both epimers of NAD(P)HX. The sequence is that of NAD(P)H-hydrate epimerase from Levilactobacillus brevis (strain ATCC 367 / BCRC 12310 / CIP 105137 / JCM 1170 / LMG 11437 / NCIMB 947 / NCTC 947) (Lactobacillus brevis).